The sequence spans 500 residues: Carnosic acid synthase (500 aa).

A helical membrane pass occupies residues 4–24; it reads LILLSLAFLASCVVAYSRRRP. C443 contacts heme.

The protein belongs to the cytochrome P450 family. The cofactor is heme. As to expression, expressed in leaf glandular trichomes.

The protein resides in the membrane. It catalyses the reaction 11-hydroxyferruginol + 3 reduced [NADPH--hemoprotein reductase] + 3 O2 = carnosate + 3 oxidized [NADPH--hemoprotein reductase] + 4 H2O + 4 H(+). It carries out the reaction miltiradiene + 2 reduced [NADPH--hemoprotein reductase] + 2 O2 = miltiradien-20-al + 2 oxidized [NADPH--hemoprotein reductase] + 3 H2O + 2 H(+). The catalysed reaction is ferruginol + 3 reduced [NADPH--hemoprotein reductase] + 3 O2 = pisiferate + 3 oxidized [NADPH--hemoprotein reductase] + 4 H2O + 4 H(+). Its pathway is secondary metabolite biosynthesis; terpenoid biosynthesis. In terms of biological role, monooxygenase involved in the biosynthesis of carnosate, a potent antioxidant labdane-related diterpene natural product. Catalyzes the oxidation of 11-hydroxyferruginol to produce carnosate. Mediates the conversion of miltiradien into miltiradien-20-al. Also involved in the production of pisiferic acid and derivative products from ferruginol. The chain is Carnosic acid synthase from Salvia pomifera (Apple sage).